Reading from the N-terminus, the 533-residue chain is Peptide chain release factor 3 (533 aa).

The tr-type G domain maps to Ala-9–Leu-284. Residues Ser-18 to Thr-25, Asp-95 to His-99, and Asn-149 to Asp-152 each bind GTP.

It belongs to the TRAFAC class translation factor GTPase superfamily. Classic translation factor GTPase family. PrfC subfamily.

The protein localises to the cytoplasm. Its function is as follows. Increases the formation of ribosomal termination complexes and stimulates activities of RF-1 and RF-2. It binds guanine nucleotides and has strong preference for UGA stop codons. It may interact directly with the ribosome. The stimulation of RF-1 and RF-2 is significantly reduced by GTP and GDP, but not by GMP. The protein is Peptide chain release factor 3 of Cupriavidus pinatubonensis (strain JMP 134 / LMG 1197) (Cupriavidus necator (strain JMP 134)).